An 863-amino-acid polypeptide reads, in one-letter code: Alanine--tRNA ligase (863 aa).

4 residues coordinate Zn(2+): His-552, His-556, Cys-654, and His-658.

It belongs to the class-II aminoacyl-tRNA synthetase family. Requires Zn(2+) as cofactor.

It is found in the cytoplasm. The enzyme catalyses tRNA(Ala) + L-alanine + ATP = L-alanyl-tRNA(Ala) + AMP + diphosphate. In terms of biological role, catalyzes the attachment of alanine to tRNA(Ala) in a two-step reaction: alanine is first activated by ATP to form Ala-AMP and then transferred to the acceptor end of tRNA(Ala). Also edits incorrectly charged Ser-tRNA(Ala) and Gly-tRNA(Ala) via its editing domain. The protein is Alanine--tRNA ligase of Halorhodospira halophila (strain DSM 244 / SL1) (Ectothiorhodospira halophila (strain DSM 244 / SL1)).